Here is a 179-residue protein sequence, read N- to C-terminus: uncharacterized protein (179 aa).

Disordered regions lie at residues 26–103 (LSAV…SYED) and 136–179 (KHKA…SWFN). Positions 34-61 (QQGKNEEQRQHDEWVAERNREIQQEKQR) are enriched in basic and acidic residues. Residues 63–79 (ANAQAAANKRAATAAAN) are compositionally biased toward low complexity. Composition is skewed to basic and acidic residues over residues 82 to 103 (ARQD…SYED) and 158 to 179 (GGRD…SWFN).

This is an uncharacterized protein from Escherichia coli (strain K12).